Here is a 584-residue protein sequence, read N- to C-terminus: 2-isopropylmalate synthase (584 aa).

In terms of domain architecture, Pyruvate carboxyltransferase spans 45 to 323; sequence PRWLSTDLRD…SPNLDFSKLD (279 aa). The a divalent metal cation site is built by Asp54, His262, His264, and Asn298.

Belongs to the alpha-IPM synthase/homocitrate synthase family. LeuA type 2 subfamily. As to quaternary structure, homodimer. It depends on a divalent metal cation as a cofactor.

It catalyses the reaction 3-methyl-2-oxobutanoate + acetyl-CoA + H2O = (2S)-2-isopropylmalate + CoA + H(+). The protein operates within amino-acid biosynthesis; L-leucine biosynthesis; L-leucine from 3-methyl-2-oxobutanoate: step 1/4. In terms of biological role, catalyzes the condensation of the acetyl group of acetyl-CoA with 3-methyl-2-oxobutanoate (2-oxoisovalerate) to form 3-carboxy-3-hydroxy-4-methylpentanoate (2-isopropylmalate). This chain is 2-isopropylmalate synthase (leu3), found in Schizosaccharomyces pombe (strain 972 / ATCC 24843) (Fission yeast).